Here is a 367-residue protein sequence, read N- to C-terminus: Glutamate 5-kinase (367 aa).

Lysine 8 is a binding site for ATP. Serine 49, aspartate 136, and asparagine 148 together coordinate substrate. Residues 168 to 169 (TD) and 210 to 216 (TGGMATK) each bind ATP. The region spanning 275–353 (TGKLLLDAGA…DQIVQILGYE (79 aa)) is the PUA domain.

The protein belongs to the glutamate 5-kinase family.

It is found in the cytoplasm. The catalysed reaction is L-glutamate + ATP = L-glutamyl 5-phosphate + ADP. The protein operates within amino-acid biosynthesis; L-proline biosynthesis; L-glutamate 5-semialdehyde from L-glutamate: step 1/2. In terms of biological role, catalyzes the transfer of a phosphate group to glutamate to form L-glutamate 5-phosphate. The chain is Glutamate 5-kinase from Synechococcus elongatus (strain ATCC 33912 / PCC 7942 / FACHB-805) (Anacystis nidulans R2).